The chain runs to 392 residues: Probable tRNA pseudouridine synthase D 1 (392 aa).

The Nucleophile role is filled by aspartate 92. Residues 167 to 354 (YFLNYYGVQR…FIGDRRAMIG (188 aa)) form the TRUD domain.

The protein belongs to the pseudouridine synthase TruD family.

The catalysed reaction is uridine(13) in tRNA = pseudouridine(13) in tRNA. Functionally, could be responsible for synthesis of pseudouridine from uracil-13 in transfer RNAs. The polypeptide is Probable tRNA pseudouridine synthase D 1 (Methanocaldococcus jannaschii (strain ATCC 43067 / DSM 2661 / JAL-1 / JCM 10045 / NBRC 100440) (Methanococcus jannaschii)).